Reading from the N-terminus, the 77-residue chain is Acyl carrier protein (77 aa).

The region spanning 2-77 (SDIAARVKKI…DATKFISEAQ (76 aa)) is the Carrier domain. O-(pantetheine 4'-phosphoryl)serine is present on S37.

The protein belongs to the acyl carrier protein (ACP) family. In terms of processing, 4'-phosphopantetheine is transferred from CoA to a specific serine of apo-ACP by AcpS. This modification is essential for activity because fatty acids are bound in thioester linkage to the sulfhydryl of the prosthetic group.

The protein resides in the cytoplasm. Its pathway is lipid metabolism; fatty acid biosynthesis. Its function is as follows. Carrier of the growing fatty acid chain in fatty acid biosynthesis. This chain is Acyl carrier protein, found in Jannaschia sp. (strain CCS1).